A 1239-amino-acid polypeptide reads, in one-letter code: Protein strawberry notch homolog 1 (1239 aa).

Residues 684 to 837 (AQSNNNSPRD…SANSNTNSSF (154 aa)) are disordered. Positions 694 to 713 (SPCKENKIKKRKGEEVSREA) are enriched in basic and acidic residues. A compositionally biased stretch (acidic residues) spans 728–744 (DESESESDASDNEESDN). Over residues 778–790 (KEHKKVKEKKKKK) the composition is skewed to basic residues. Residues 814-837 (FTSTVGTTTSSTNASANSNTNSSF) are compositionally biased toward low complexity. Residues 838–866 (VTSQDAVERAQQMKKELLDKLEKLAEDLP) adopt a coiled-coil conformation.

It belongs to the SBNO family.

It localises to the nucleus. Functionally, plays a crucial role in the regulation of neural stem cells (NSCs) proliferation. Enhances the phosphorylation of GSK3B through the PI3K-Akt signaling pathway, thereby upregulating the Wnt/beta-catenin signaling pathway and promoting the proliferation of NSCs. This Gallus gallus (Chicken) protein is Protein strawberry notch homolog 1 (SBNO1).